The sequence spans 325 residues: GMP reductase (325 aa).

The Thioimidate intermediate role is filled by C174. Residue 203-226 participates in NADP(+) binding; the sequence is LIADGGIRTHGDIAKSIRFGATMV.

The protein belongs to the IMPDH/GMPR family. GuaC type 2 subfamily.

The catalysed reaction is IMP + NH4(+) + NADP(+) = GMP + NADPH + 2 H(+). In terms of biological role, catalyzes the irreversible NADPH-dependent deamination of GMP to IMP. It functions in the conversion of nucleobase, nucleoside and nucleotide derivatives of G to A nucleotides, and in maintaining the intracellular balance of A and G nucleotides. The chain is GMP reductase from Pediococcus pentosaceus (strain ATCC 25745 / CCUG 21536 / LMG 10740 / 183-1w).